A 143-amino-acid chain; its full sequence is Small ribosomal subunit protein uS12 (143 aa).

At P62 the chain carries Hydroxyproline.

The protein belongs to the universal ribosomal protein uS12 family.

The sequence is that of Small ribosomal subunit protein uS12 (rps23) from Dictyostelium discoideum (Social amoeba).